A 248-amino-acid polypeptide reads, in one-letter code: MPEHAPDGVRPARPHHKLTADGRRMREVLTYSRRGSRFSPRQQQAWAAYAERWWVPDEAVDDPGFTLAGCFERSAPLIVEIGSGIGESTVALAAARPDHDVVAIEVWRPGVADTLGRIGAAGLSNVRLLSVDAVWSMAHLVEPDSLAALWTFFPDPWHKAKHHKRRLVTASFARLVAGRLAPGAEWRLATDWADYADQMVEVLDAEPMLEGGVVERWAERPVTKFERKGIAAGRAITDLAYRRRGAAR.

Residues Glu-80, Glu-105, Asp-132, and Asp-155 each coordinate S-adenosyl-L-methionine. Asp-155 is a catalytic residue. Substrate is bound by residues Lys-159, Asp-191, and 223–226 (TKFE).

Belongs to the class I-like SAM-binding methyltransferase superfamily. TrmB family.

It catalyses the reaction guanosine(46) in tRNA + S-adenosyl-L-methionine = N(7)-methylguanosine(46) in tRNA + S-adenosyl-L-homocysteine. Its pathway is tRNA modification; N(7)-methylguanine-tRNA biosynthesis. Catalyzes the formation of N(7)-methylguanine at position 46 (m7G46) in tRNA. The chain is tRNA (guanine-N(7)-)-methyltransferase from Nocardioides sp. (strain ATCC BAA-499 / JS614).